The primary structure comprises 60 residues: Cytotoxin 1 (60 aa).

Disulfide bonds link Cys-3-Cys-21, Cys-14-Cys-38, Cys-42-Cys-53, and Cys-54-Cys-59.

It belongs to the three-finger toxin family. Short-chain subfamily. Type IA cytotoxin sub-subfamily. In terms of assembly, monomer in solution; Homodimer and oligomer in the presence of negatively charged lipids forming a pore with a size ranging between 20 and 30 Angstroms. Expressed by the venom gland.

The protein resides in the secreted. It localises to the target cell membrane. Its function is as follows. Shows cytolytic activity on many different cells by forming pore in lipid membranes. In vivo, increases heart rate or kills the animal by cardiac arrest. In addition, it binds to heparin with high affinity, interacts with Kv channel-interacting protein 1 (KCNIP1) in a calcium-independent manner, and binds to integrin alpha-V/beta-3 (ITGAV/ITGB3) with moderate affinity. This chain is Cytotoxin 1, found in Naja nivea (Cape cobra).